The chain runs to 353 residues: Photosystem II D2 protein (353 aa).

The residue at position 2 (threonine 2) is an N-acetylthreonine. Residue threonine 2 is modified to Phosphothreonine. A helical membrane pass occupies residues 41 to 61 (CAYFALGGWFTGTTFVTSWYT). Histidine 118 serves as a coordination point for chlorophyll a. Residues 125-141 (GFMLRQFELARSVQLRP) traverse the membrane as a helical segment. Residues glutamine 130 and asparagine 143 each coordinate pheophytin a. The helical transmembrane segment at 153–166 (VFVSVFLIYPLGQS) threads the bilayer. Histidine 198 lines the chlorophyll a pocket. A helical transmembrane segment spans residues 208-228 (AALLCAIHGATVENTLFEDGD). 2 residues coordinate a plastoquinone: histidine 215 and phenylalanine 262. A Fe cation-binding site is contributed by histidine 215. A Fe cation-binding site is contributed by histidine 269. The chain crosses the membrane as a helical span at residues 279–295 (GLWMSALGVVGLALNLR).

It belongs to the reaction center PufL/M/PsbA/D family. As to quaternary structure, PSII is composed of 1 copy each of membrane proteins PsbA, PsbB, PsbC, PsbD, PsbE, PsbF, PsbH, PsbI, PsbJ, PsbK, PsbL, PsbM, PsbT, PsbX, PsbY, PsbZ, Psb30/Ycf12, at least 3 peripheral proteins of the oxygen-evolving complex and a large number of cofactors. It forms dimeric complexes. The D1/D2 heterodimer binds P680, chlorophylls that are the primary electron donor of PSII, and subsequent electron acceptors. It shares a non-heme iron and each subunit binds pheophytin, quinone, additional chlorophylls, carotenoids and lipids. There is also a Cl(-1) ion associated with D1 and D2, which is required for oxygen evolution. The PSII complex binds additional chlorophylls, carotenoids and specific lipids. is required as a cofactor.

The protein localises to the plastid. Its subcellular location is the chloroplast thylakoid membrane. It catalyses the reaction 2 a plastoquinone + 4 hnu + 2 H2O = 2 a plastoquinol + O2. Photosystem II (PSII) is a light-driven water:plastoquinone oxidoreductase that uses light energy to abstract electrons from H(2)O, generating O(2) and a proton gradient subsequently used for ATP formation. It consists of a core antenna complex that captures photons, and an electron transfer chain that converts photonic excitation into a charge separation. The D1/D2 (PsbA/PsbD) reaction center heterodimer binds P680, the primary electron donor of PSII as well as several subsequent electron acceptors. D2 is needed for assembly of a stable PSII complex. This is Photosystem II D2 protein from Spinacia oleracea (Spinach).